The primary structure comprises 1081 residues: Probable sucrose-phosphate synthase 2 (1081 aa).

Disordered stretches follow at residues E116–N152, E239–G267, and I760–P780. Residues E256–G267 show a composition bias toward acidic residues.

It belongs to the glycosyltransferase 1 family. Homodimer or homotetramer.

The catalysed reaction is beta-D-fructose 6-phosphate + UDP-alpha-D-glucose = sucrose 6(F)-phosphate + UDP + H(+). The protein operates within glycan biosynthesis; sucrose biosynthesis; sucrose from D-fructose 6-phosphate and UDP-alpha-D-glucose: step 1/2. Its activity is regulated as follows. Activity is regulated by phosphorylation and moderated by concentration of metabolites and light. Functionally, plays a role in photosynthetic sucrose synthesis by catalyzing the rate-limiting step of sucrose biosynthesis from UDP-glucose and fructose- 6-phosphate. Involved in the regulation of carbon partitioning in the leaves of plants. May regulate the synthesis of sucrose and therefore play a major role as a limiting factor in the export of photoassimilates out of the leaf. Plays a role for sucrose availability that is essential for plant growth and fiber elongation. The protein is Probable sucrose-phosphate synthase 2 (SPS2) of Craterostigma plantagineum (Blue gem).